A 239-amino-acid polypeptide reads, in one-letter code: Phosphoribosylaminoimidazole-succinocarboxamide synthase (239 aa).

This sequence belongs to the SAICAR synthetase family.

The catalysed reaction is 5-amino-1-(5-phospho-D-ribosyl)imidazole-4-carboxylate + L-aspartate + ATP = (2S)-2-[5-amino-1-(5-phospho-beta-D-ribosyl)imidazole-4-carboxamido]succinate + ADP + phosphate + 2 H(+). It functions in the pathway purine metabolism; IMP biosynthesis via de novo pathway; 5-amino-1-(5-phospho-D-ribosyl)imidazole-4-carboxamide from 5-amino-1-(5-phospho-D-ribosyl)imidazole-4-carboxylate: step 1/2. The polypeptide is Phosphoribosylaminoimidazole-succinocarboxamide synthase (Acinetobacter baumannii (strain AB307-0294)).